The following is a 247-amino-acid chain: Transmembrane protein 33 (247 aa).

The residue at position 2 (alanine 2) is an N-acetylalanine. The Lumenal portion of the chain corresponds to 2–31; sequence ADTTPNGPQGAGAVQFMMTNKLDTAMWLSR. Residues 32 to 52 traverse the membrane as a helical segment; the sequence is LFTVYCSALFVLPLLGLHEAA. At 53-100 the chain is on the cytoplasmic side; it reads SFYQRALLANALTSALRLHQRLPHFQLSRAFLAQALLEDSCHYLLYSL. The helical transmembrane segment at 101–121 threads the bilayer; the sequence is IFVNSYPVTMSIFPVLLFSLL. At 122-155 the chain is on the lumenal side; sequence HAATYTKKVLDARGSNSLPLLRSVLDKLSANQQN. A helical transmembrane segment spans residues 156 to 176; it reads ILKFIACNEIFLMPATVFMLF. Topologically, residues 177-247 are cytoplasmic; it reads SGQGSLLQPF…FISRLAPTVP (71 aa).

Belongs to the PER33/POM33 family. As to quaternary structure, interacts with EIF2AK3. Interacts with ARL6IP1, isoform RTN1-A of RTN1, isoform RTN2-B of RTN2, isoform 3 of RTN3 and isoform 3 of RTN4. Interacts with RNF5. Interacts with RNF26. Interacts with PKD2. Prostate cancer and several cancer cell lines (at protein level). Widely expressed. Expressed at higher levels in endocrine-resistant breast cancer cells as compared to endocrine-sensitive breast cancer cells. Expressed at higher levels in early recurrence breast cancer tissues as compared to non-recurrent breast tumors.

The protein localises to the endoplasmic reticulum membrane. The protein resides in the melanosome. Its subcellular location is the nucleus envelope. Functionally, acts as a regulator of the tubular endoplasmic reticulum (ER) network by modulating intracellular calcium homeostasis. Mechanistically, stimulates PKD2 calcium-dependent activity. Suppresses the RTN3/4-induced formation of the ER tubules. Positively regulates PERK-mediated and IRE1-mediated unfolded protein response signaling. Plays an essential role in VEGF-mediated release of Ca(2+) from ER stores during angiogenesis. Also plays a role in the modulation of innate immune signaling through the cGAS-STING pathway by interacting with RNF26. Participates in lipid metabolism by acting as a downstream effector of the pyruvate kinase/PKM. Forms a complex with RNF5 to facilitate polyubiquitination and subsequent degradation of SCAP on the ER membrane. This chain is Transmembrane protein 33 (TMEM33), found in Homo sapiens (Human).